The following is an 88-amino-acid chain: Small ribosomal subunit protein bS20 (88 aa).

Residues 1 to 27 (MANIKSQIKRNKTNEKARLRNKAVKSS) form a disordered region.

This sequence belongs to the bacterial ribosomal protein bS20 family.

Binds directly to 16S ribosomal RNA. This chain is Small ribosomal subunit protein bS20, found in Streptomyces griseus subsp. griseus (strain JCM 4626 / CBS 651.72 / NBRC 13350 / KCC S-0626 / ISP 5235).